The sequence spans 504 residues: MTTFTKLSEQEAPSLSVHPTRRISKINPNIYAGFTEHMGRCIYGGIYDPGNPLSDENGFRKDVLEALKELNIPVVRYPGGNFMATYHWIDGVGPKDQRPARPELAWLGTETNQFGTDEFLKWCEVLGTEPYFCLNFGTGTLDEALAWVEYCNGTRDTYYANLRRKNGREEPYNVKYWALGNETWGPWQVEQMTKEAYAHKAYQWAKALKLLDPSLVLVLCGQDGTASWDYYTLKQCLLPLNSPLSTSAVPLIDMHSIHLYTASSDHRANATAPLAAERAIEITSSLIDLARIENGVPADQLRPTICFDEWNVWDPIRAEGSKGAEECYTLSDALAVAVYLNVFVRKSKDLGMCCIAQSVNVISPLMTTKDGITKQTTWWPLYLFSRYMRGWTISAHLSCSTYEGETSPKWVRGVKDTPWLDVSATLGEDGYVNLAVVNVHDDKGIETQLEGPSGEVSVFTVTGDNVNVTNMKGKQEVGIVESTWDGKGKYVFPKHSFTLLRWKA.

Residues asparagine 152, asparagine 181, asparagine 269, and asparagine 467 are each glycosylated (N-linked (GlcNAc...) asparagine).

This sequence belongs to the glycosyl hydrolase 51 family.

The protein resides in the secreted. It carries out the reaction Hydrolysis of terminal non-reducing alpha-L-arabinofuranoside residues in alpha-L-arabinosides.. It functions in the pathway glycan metabolism; L-arabinan degradation. Functionally, alpha-L-arabinofuranosidase involved in the degradation of arabinoxylan, a major component of plant hemicellulose. Acts only on small linear 1,5-alpha-linked L-arabinofuranosyl oligosaccharides. The protein is Probable alpha-L-arabinofuranosidase C (abfC) of Aspergillus terreus (strain NIH 2624 / FGSC A1156).